A 317-amino-acid chain; its full sequence is Melanocyte-stimulating hormone receptor (317 aa).

Residues 1–37 (MVWQGPQRRLLGSLNGTSPATPHFELAANQTGPRCLE) lie on the Extracellular side of the membrane. Asn15 and Asn29 each carry an N-linked (GlcNAc...) asparagine glycan. A helical membrane pass occupies residues 38-63 (VSIPNGLFLSLGLVSVVENVLVVAAI). The Cytoplasmic portion of the chain corresponds to 64-72 (AKNRNLHSP). The helical transmembrane segment at 73–93 (MYYFIGCLAVSDLLVSVTNVL) threads the bilayer. Residues 94–118 (ETAVMLLVEAGALAAQAAVVQQLDD) are Extracellular-facing. Residues 119–140 (IIDVLICGSMVSSLCFLGAIAV) form a helical membrane-spanning segment. Residues 141–163 (DRYLSIFYALRYHSIVTLPRAWR) are Cytoplasmic-facing. A helical membrane pass occupies residues 164–183 (AISAIWVASVLSSTLFIAYY). At 184 to 191 (NHTAVLLC) the chain is on the extracellular side. The chain crosses the membrane as a helical span at residues 192–211 (LVSFFVAMLVLMAVLYVHML). Over 212-240 (ARARQHARGIARLRKRQHSVHQGFGLKGA) the chain is Cytoplasmic. A helical membrane pass occupies residues 241–266 (ATLTILLGIFFLCWGPFFLHLSLMVL). Topologically, residues 267–279 (CPQHPICGCVFQN) are extracellular. Residues 280–300 (FNLFLTLIICNSIIDPFIYAF) form a helical membrane-spanning segment. At 301 to 317 (RSQELRKTLQEVVLCSW) the chain is on the cytoplasmic side. Cys315 is lipidated: S-palmitoyl cysteine.

Belongs to the G-protein coupled receptor 1 family. As to quaternary structure, interacts with MGRN1, but does not undergo MGRN1-mediated ubiquitination; this interaction competes with GNAS-binding and thus inhibits agonist-induced cAMP production. Interacts with OPN3; the interaction results in a decrease in MC1R-mediated cAMP signaling and ultimately a decrease in melanin production in melanocytes.

It is found in the cell membrane. In terms of biological role, receptor for MSH (alpha, beta and gamma) and ACTH. The activity of this receptor is mediated by G proteins which activate adenylate cyclase. Mediates melanogenesis, the production of eumelanin (black/brown) and phaeomelanin (red/yellow), via regulation of cAMP signaling in melanocytes. The sequence is that of Melanocyte-stimulating hormone receptor (MC1R) from Canis lupus familiaris (Dog).